Reading from the N-terminus, the 80-residue chain is Toxin Acra1 (80 aa).

The first 22 residues, 1–22 (MMKLVLFSIIVILFSLIGSIHG), serve as a signal peptide directing secretion. The region spanning 25-80 (VPGNYPLDSSGNKYPCTVLGDNQSCIDVCKKHGVKYGYCYSFKCWCEFLEDKNVSI) is the LCN-type CS-alpha/beta domain. 3 disulfide bridges follow: cysteine 40-cysteine 63, cysteine 49-cysteine 68, and cysteine 53-cysteine 70.

In terms of tissue distribution, expressed by the venom gland.

Its subcellular location is the secreted. Its function is as follows. Probable neurotoxin that inhibits ion channels. Is toxic to mice. Is about 2.8% of the total protein in the venom. The chain is Toxin Acra1 from Androctonus crassicauda (Arabian fat-tailed scorpion).